A 227-amino-acid chain; its full sequence is ATP-dependent dethiobiotin synthetase BioD (227 aa).

Position 13–18 (glutamate 13–valine 18) interacts with ATP. Residue serine 17 participates in Mg(2+) binding. Lysine 38 is an active-site residue. Serine 42 is a substrate binding site. ATP is bound by residues aspartate 55, glutamate 116–glycine 119, and asparagine 176–aspartate 177. Mg(2+) is bound by residues aspartate 55 and glutamate 116.

It belongs to the dethiobiotin synthetase family. Homodimer. The cofactor is Mg(2+).

The protein resides in the cytoplasm. The enzyme catalyses (7R,8S)-7,8-diammoniononanoate + CO2 + ATP = (4R,5S)-dethiobiotin + ADP + phosphate + 3 H(+). The protein operates within cofactor biosynthesis; biotin biosynthesis; biotin from 7,8-diaminononanoate: step 1/2. Its function is as follows. Catalyzes a mechanistically unusual reaction, the ATP-dependent insertion of CO2 between the N7 and N8 nitrogen atoms of 7,8-diaminopelargonic acid (DAPA, also called 7,8-diammoniononanoate) to form a ureido ring. This Serratia marcescens protein is ATP-dependent dethiobiotin synthetase BioD.